The chain runs to 2146 residues: YLP motif-containing protein 1 (2146 aa).

2 disordered regions span residues 1 to 381 and 562 to 880; these read MYPN…ARLK and PPVM…FKMQ. A compositionally biased stretch (pro residues) spans 14–26; sequence YPPPPVPPPPPVA. Composition is skewed to low complexity over residues 27–48 and 58–79; these read LPEA…PSSS and LAQL…LQPH. Pro residues-rich tracts occupy residues 80–92, 101–113, 147–157, 165–175, and 183–194; these read HLPP…PPVM, QPPP…PPGP, PESPPVPPGSY, MPPPQPPPSYY, and YLPPAQPSPSQS. Over residues 195-237 the composition is skewed to low complexity; the sequence is PPSQSYLAPTPSYSSSSSSSQSYLSHSQSYLPSSQASPSRPSQ. Polar residues-rich tracts occupy residues 256 to 279 and 286 to 308; these read NKTT…QQQA and STMT…LQQR. Basic residues predominate over residues 309-319; it reads TKVHLPGHKKG. Residues 325 to 334 are compositionally biased toward basic and acidic residues; that stretch reads DTPEPVKEEV. Composition is skewed to pro residues over residues 349–368, 562–579, and 586–642; these read EEPP…PPEE, PPVM…PGMP, and GPPP…PQGI. The span at 643–663 shows a compositional bias: low complexity; the sequence is PPQLTAAPVPPASSSQSSQVP. Positions 692–702 are enriched in polar residues; the sequence is AGPSEQVNSKA. The residue at position 735 (Lys-735) is an N6-methyllysine. Residue Ser-756 is modified to Phosphoserine. The segment covering 758 to 806 has biased composition (basic and acidic residues); sequence RGPRFDGPRRFEDLGSRCEGPRPKGPRFEGNRPDGPRPRYEGHPAEGTK. Position 814 is an omega-N-methylarginine (Arg-814). 2 stretches are compositionally biased toward polar residues: residues 820-835 and 868-880; these read FYIT…QSGP and DTSS…FKMQ. At Ser-829 the chain carries Phosphoserine. Arg-831 bears the Omega-N-methylarginine mark. Residue Lys-891 forms a Glycyl lysine isopeptide (Lys-Gly) (interchain with G-Cter in SUMO2) linkage. 2 disordered regions span residues 895 to 1211 and 1243 to 1351; these read AAQS…GRNA and NRED…DDRW. 2 stretches are compositionally biased toward polar residues: residues 896-909 and 923-933; these read AQSN…QQEP and NWDQNVQSMET. Lys-983 is covalently cross-linked (Glycyl lysine isopeptide (Lys-Gly) (interchain with G-Cter in SUMO1); alternate). Lys-983 participates in a covalent cross-link: Glycyl lysine isopeptide (Lys-Gly) (interchain with G-Cter in SUMO2); alternate. Basic and acidic residues-rich tracts occupy residues 994–1012, 1027–1036, and 1053–1093; these read NNQD…RLEG, RMEDTRDKGL, and KQED…REKV. A Glycyl lysine isopeptide (Lys-Gly) (interchain with G-Cter in SUMO1); alternate cross-link involves residue Lys-1053. Lys-1053 is covalently cross-linked (Glycyl lysine isopeptide (Lys-Gly) (interchain with G-Cter in SUMO2); alternate). Phosphoserine is present on residues Ser-1100 and Ser-1119. Basic and acidic residues-rich tracts occupy residues 1129–1211 and 1243–1264; these read GSRE…GRNA and NRED…RGPW. The span at 1266-1276 shows a compositional bias: acidic residues; that stretch reads DDWERDQDMDE. Residues 1277-1328 show a composition bias toward basic and acidic residues; the sequence is DYNREMERDMDRDVDRISRPMDMYDRSLDNEWDRDYGRPLDEQESQFRERDI. Pro residues predominate over residues 1330–1342; the sequence is SLPPLPPLPPLPP. Ser-1402 carries the phosphoserine modification. Disordered stretches follow at residues 1407 to 1438, 1469 to 1573, and 1602 to 1828; these read PSDV…SLDS, QKEQ…EQER, and IPSA…PPGR. Over residues 1417-1430 the composition is skewed to low complexity; the sequence is AEHMPSSHHSSEMM. A compositionally biased stretch (basic and acidic residues) spans 1469-1480; it reads QKEQLQKMKDFG. Over residues 1505–1520 the composition is skewed to pro residues; sequence MYPPPGSYRPPPPMGK. Residues 1521–1539 show a composition bias toward low complexity; the sequence is PPGSIVRPSAPPARSSVPV. Composition is skewed to pro residues over residues 1540 to 1562 and 1606 to 1636; these read TRPP…PPVI and PVLP…PPPV. A Glycyl lysine isopeptide (Lys-Gly) (interchain with G-Cter in SUMO2) cross-link involves residue Lys-1652. 4 stretches are compositionally biased toward basic and acidic residues: residues 1662-1696, 1704-1774, 1783-1793, and 1809-1828; these read ITLR…EPYF, ADHR…DRPV, GERRTYPEERM, and RVEK…PPGR. A Glycyl lysine isopeptide (Lys-Gly) (interchain with G-Cter in SUMO2) cross-link involves residue Lys-1710. Residues 2096–2103 are involved in interaction with PPP1CA; it reads KKRVRWAD.

In terms of assembly, interacts with PPP1CA and NCOA5. Forms a complex with ILF2, ILF3, KHDRBS1, RBMX, NCOA5 and PPP1CA. As to expression, expressed in neuronal, neuroblastoma and embryonic kidney cell lines (at protein level).

It is found in the nucleus. The protein resides in the nucleus speckle. Functionally, plays a role in the reduction of telomerase activity during differentiation of embryonic stem cells by binding to the core promoter of TERT and controlling its down-regulation. The sequence is that of YLP motif-containing protein 1 (YLPM1) from Homo sapiens (Human).